Consider the following 267-residue polypeptide: 4-hydroxy-tetrahydrodipicolinate reductase (267 aa).

NAD(+) contacts are provided by residues 8 to 13 (GAAGRM) and Asp-34. Residue Arg-35 participates in NADP(+) binding. Residues 98–100 (GTT) and 122–125 (AANF) each bind NAD(+). The Proton donor/acceptor role is filled by His-155. Position 156 (His-156) interacts with (S)-2,3,4,5-tetrahydrodipicolinate. The active-site Proton donor is Lys-159. A (S)-2,3,4,5-tetrahydrodipicolinate-binding site is contributed by 165-166 (GT).

Belongs to the DapB family.

The protein localises to the cytoplasm. The catalysed reaction is (S)-2,3,4,5-tetrahydrodipicolinate + NAD(+) + H2O = (2S,4S)-4-hydroxy-2,3,4,5-tetrahydrodipicolinate + NADH + H(+). It carries out the reaction (S)-2,3,4,5-tetrahydrodipicolinate + NADP(+) + H2O = (2S,4S)-4-hydroxy-2,3,4,5-tetrahydrodipicolinate + NADPH + H(+). It participates in amino-acid biosynthesis; L-lysine biosynthesis via DAP pathway; (S)-tetrahydrodipicolinate from L-aspartate: step 4/4. In terms of biological role, catalyzes the conversion of 4-hydroxy-tetrahydrodipicolinate (HTPA) to tetrahydrodipicolinate. In Pseudomonas savastanoi pv. phaseolicola (strain 1448A / Race 6) (Pseudomonas syringae pv. phaseolicola (strain 1448A / Race 6)), this protein is 4-hydroxy-tetrahydrodipicolinate reductase.